Consider the following 317-residue polypeptide: 2,3-dihydroxyphenylpropionate/2,3-dihydroxicinnamic acid 1,2-dioxygenase (317 aa).

His-115 serves as the catalytic Proton donor. Residue His-179 is the Proton acceptor of the active site.

This sequence belongs to the LigB/MhpB extradiol dioxygenase family. As to quaternary structure, homotetramer. It depends on Fe(2+) as a cofactor.

The enzyme catalyses 3-(2,3-dihydroxyphenyl)propanoate + O2 = (2Z,4E)-2-hydroxy-6-oxonona-2,4-dienedioate + H(+). It carries out the reaction (2E)-3-(2,3-dihydroxyphenyl)prop-2-enoate + O2 = (2Z,4E,7E)-2-hydroxy-6-oxonona-2,4,7-trienedioate + H(+). It participates in aromatic compound metabolism; 3-phenylpropanoate degradation. In terms of biological role, catalyzes the non-heme iron(II)-dependent oxidative cleavage of 2,3-dihydroxyphenylpropionic acid and 2,3-dihydroxicinnamic acid into 2-hydroxy-6-ketononadienedioate and 2-hydroxy-6-ketononatrienedioate, respectively. The chain is 2,3-dihydroxyphenylpropionate/2,3-dihydroxicinnamic acid 1,2-dioxygenase from Photorhabdus laumondii subsp. laumondii (strain DSM 15139 / CIP 105565 / TT01) (Photorhabdus luminescens subsp. laumondii).